We begin with the raw amino-acid sequence, 372 residues long: Dual-specificity RNA methyltransferase RlmN (372 aa).

Glu92 (proton acceptor) is an active-site residue. In terms of domain architecture, Radical SAM core spans 98–337 (ETDRATLCVS…VILRKTRGDD (240 aa)). Cys105 and Cys342 are disulfide-bonded. [4Fe-4S] cluster contacts are provided by Cys112, Cys116, and Cys119. S-adenosyl-L-methionine is bound by residues 166–167 (GE), Ser198, 220–222 (SLH), and Asn299. The active-site S-methylcysteine intermediate is Cys342.

This sequence belongs to the radical SAM superfamily. RlmN family. The cofactor is [4Fe-4S] cluster.

The protein localises to the cytoplasm. It catalyses the reaction adenosine(2503) in 23S rRNA + 2 reduced [2Fe-2S]-[ferredoxin] + 2 S-adenosyl-L-methionine = 2-methyladenosine(2503) in 23S rRNA + 5'-deoxyadenosine + L-methionine + 2 oxidized [2Fe-2S]-[ferredoxin] + S-adenosyl-L-homocysteine. The enzyme catalyses adenosine(37) in tRNA + 2 reduced [2Fe-2S]-[ferredoxin] + 2 S-adenosyl-L-methionine = 2-methyladenosine(37) in tRNA + 5'-deoxyadenosine + L-methionine + 2 oxidized [2Fe-2S]-[ferredoxin] + S-adenosyl-L-homocysteine. In terms of biological role, specifically methylates position 2 of adenine 2503 in 23S rRNA and position 2 of adenine 37 in tRNAs. m2A2503 modification seems to play a crucial role in the proofreading step occurring at the peptidyl transferase center and thus would serve to optimize ribosomal fidelity. In Histophilus somni (strain 129Pt) (Haemophilus somnus), this protein is Dual-specificity RNA methyltransferase RlmN.